The primary structure comprises 828 residues: Protein SEY1 homolog (828 aa).

Residues 1-718 lie on the Cytoplasmic side of the membrane; the sequence is MTEDVMNDDF…SSKNGISWKN (718 aa). One can recognise a GB1/RHD3-type G domain in the interval 44-284; sequence GFNYNVLSIL…VPSDGFFYYA (241 aa). 54–61 lines the GTP pocket; that stretch reads GCQSSGKS. A helical transmembrane segment spans residues 719–739; it reads IPPPFWILLLLCSWNELCSVL. The Lumenal segment spans residues 740-742; it reads RIV. Residues 743–763 form a helical membrane-spanning segment; it reads FKVQVLIPLIILGFIVVQYFS. The Cytoplasmic portion of the chain corresponds to 764 to 828; the sequence is HLVFGTSADA…NDSGKKAEEN (65 aa).

This sequence belongs to the TRAFAC class dynamin-like GTPase superfamily. GB1/RHD3 GTPase family. RHD3 subfamily.

It localises to the endoplasmic reticulum membrane. In terms of biological role, probable GTP-binding protein that may be involved in cell development. In Babesia bovis, this protein is Protein SEY1 homolog.